Here is a 552-residue protein sequence, read N- to C-terminus: CTP synthase (552 aa).

An amidoligase domain region spans residues 1 to 267; that stretch reads MAKFIFVTGG…AEQTLKLLRM (267 aa). Serine 13 serves as a coordination point for CTP. UTP is bound at residue serine 13. ATP-binding positions include 14 to 19 and aspartate 71; that span reads SIGKGI. Mg(2+) is bound by residues aspartate 71 and glutamate 141. CTP-binding positions include 148 to 150, 188 to 193, and lysine 224; these read DIE and KTKPTQ. Residues 188-193 and lysine 224 each bind UTP; that span reads KTKPTQ. The region spanning 292-534 is the Glutamine amidotransferase type-1 domain; it reads DIAIVGKYVQ…IQAAGNHKSQ (243 aa). Glycine 354 serves as a coordination point for L-glutamine. Cysteine 381 serves as the catalytic Nucleophile; for glutamine hydrolysis. L-glutamine is bound by residues 382–385, glutamate 405, and arginine 462; that span reads LGMQ. Residues histidine 507 and glutamate 509 contribute to the active site. Positions 533–552 are disordered; that stretch reads SQPISDELDNQSTEMSISLS.

Belongs to the CTP synthase family. As to quaternary structure, homotetramer.

The enzyme catalyses UTP + L-glutamine + ATP + H2O = CTP + L-glutamate + ADP + phosphate + 2 H(+). The catalysed reaction is L-glutamine + H2O = L-glutamate + NH4(+). It carries out the reaction UTP + NH4(+) + ATP = CTP + ADP + phosphate + 2 H(+). It participates in pyrimidine metabolism; CTP biosynthesis via de novo pathway; CTP from UDP: step 2/2. Its activity is regulated as follows. Allosterically activated by GTP, when glutamine is the substrate; GTP has no effect on the reaction when ammonia is the substrate. The allosteric effector GTP functions by stabilizing the protein conformation that binds the tetrahedral intermediate(s) formed during glutamine hydrolysis. Inhibited by the product CTP, via allosteric rather than competitive inhibition. In terms of biological role, catalyzes the ATP-dependent amination of UTP to CTP with either L-glutamine or ammonia as the source of nitrogen. Regulates intracellular CTP levels through interactions with the four ribonucleotide triphosphates. This is CTP synthase from Picosynechococcus sp. (strain ATCC 27264 / PCC 7002 / PR-6) (Agmenellum quadruplicatum).